The sequence spans 2006 residues: Supporter of activation of yellow protein (2006 aa).

Disordered regions lie at residues 1–208 (MNDL…RRVE), 313–347 (MPAKNDAHLSSLSPASASSSSASSSSSSSSSSSLA), 458–564 (EEKP…AQSQ), 744–794 (DTQD…DPAR), 821–916 (DLEG…KSRR), 929–1029 (VSVG…NNNS), 1044–1082 (CSSSSSTSSGAAANQQVIGGSGSSSMLPPTTILSSSDPL), and 1099–1196 (QQLR…SAVA). Over residues 10-60 (VAATSSSGSESGTAVESAAATSTAGSAGAAGRPQSNCSANSNAKSVAASST) the composition is skewed to low complexity. The span at 67-81 (VSSTSSPAQRDQQLN) shows a compositional bias: polar residues. A compositionally biased stretch (pro residues) spans 118 to 128 (SPPPTLPPPTT). Positions 129 to 168 (PCDDAPSTTGASASASSASGEAPSAASAAGAAGGPMAATA) are enriched in low complexity. The span at 189 to 199 (ANPNSNANESQ) shows a compositional bias: polar residues. Low complexity predominate over residues 321–347 (LSSLSPASASSSSASSSSSSSSSSSLA). A compositionally biased stretch (polar residues) spans 485 to 494 (GGESNSSSQE). The segment covering 525–534 (SLSKEHDPKI) has biased composition (basic and acidic residues). Positions 543–563 (ASNGIASGGSKASKASKSAQS) are enriched in low complexity. The segment covering 744–758 (DTQDNNNENHLKRTN) has biased composition (basic and acidic residues). Polar residues-rich tracts occupy residues 759 to 769 (SEGNESPSSRL) and 828 to 844 (PPTQQQSISTPDQNGAL). Residues 861–870 (PATPQPPPVA) show a composition bias toward pro residues. Composition is skewed to basic and acidic residues over residues 936–945 (ADMKAKEKES) and 963–972 (ESPKTRDHRP). 2 stretches are compositionally biased toward low complexity: residues 978–990 (RTTTSTNTNLQPT) and 1018–1029 (SSESESNNNNNS). Positions 1053–1080 (GAAANQQVIGGSGSSSMLPPTTILSSSD) are enriched in polar residues. Residues 1103–1112 (SSRPSSISCG) are compositionally biased toward low complexity. Basic residues predominate over residues 1147–1158 (GRGRGRRSRGGR). Low complexity predominate over residues 1161–1173 (GSSSVDRAVSVGG). An SAY region spans residues 1340–1573 (MIQEQVALYL…PPTDLMAQLL (234 aa)). The segment at 1579–1685 (AVGSDEIKTS…AGSEDEDGNE (107 aa)) is disordered. 2 stretches are compositionally biased toward low complexity: residues 1627–1652 (TASSSSTSSAQSVSSASSGNGSSSDT) and 1660–1677 (FSSTSSCSSSTGASSGAG). A PHD-type 1; degenerate zinc finger spans residues 1694–1751 (TCGVCLRSQHRNARDMPEAFIRCYTCRKRVHPSCVDMPPRMVGRVRNYNWQCAGCKCC). The segment at 1753 to 1796 (KCRSSQRPGKMLYCEQCDRGYHIYCLGLRTVPDGRWSCERCCFC) adopts a PHD-type 2; degenerate zinc-finger fold. Residues 1887 to 1911 (TSAQTDDSPMPSPGLTTNGGRALSP) form a disordered region.

The protein belongs to the SAYP family. As to expression, widely expressed. Highly expressed in ovary. Expressed in nursing cells and growing oocytes at all stages of development and accumulates in mature oocytes. Expressed in the nuclei of syncytium blastoderm of early embryos and in the nuclei of different tissues of late embryos, larvae, and adults.

It is found in the nucleus. The protein resides in the cytoplasm. It localises to the chromosome. Essential transcription regulator during early development. Coactivates transcription of some euchromatin genes and repress transcription in of euchromatin genes translocated to heterochromatin. In Drosophila melanogaster (Fruit fly), this protein is Supporter of activation of yellow protein (e(y)3).